A 179-amino-acid chain; its full sequence is MAKVAKKYAKALFDVALDTNQLDVVYEDLETISHSSFDFIKQLKAIDSNPSLTANQREEFVERVYNEANPYVVNTLKVLADNRHISIVENVFKSFQNLYNKYYKQDFAIIESTYELSEDEISRIVELIKKQTELSNVIVNTKINQDLIGGFRVKVGTTVMDGSVRNDLVQLQRKFERAN.

Belongs to the ATPase delta chain family. In terms of assembly, F-type ATPases have 2 components, F(1) - the catalytic core - and F(0) - the membrane proton channel. F(1) has five subunits: alpha(3), beta(3), gamma(1), delta(1), epsilon(1). F(0) has three main subunits: a(1), b(2) and c(10-14). The alpha and beta chains form an alternating ring which encloses part of the gamma chain. F(1) is attached to F(0) by a central stalk formed by the gamma and epsilon chains, while a peripheral stalk is formed by the delta and b chains.

Its subcellular location is the cell membrane. Its function is as follows. F(1)F(0) ATP synthase produces ATP from ADP in the presence of a proton or sodium gradient. F-type ATPases consist of two structural domains, F(1) containing the extramembraneous catalytic core and F(0) containing the membrane proton channel, linked together by a central stalk and a peripheral stalk. During catalysis, ATP synthesis in the catalytic domain of F(1) is coupled via a rotary mechanism of the central stalk subunits to proton translocation. This protein is part of the stalk that links CF(0) to CF(1). It either transmits conformational changes from CF(0) to CF(1) or is implicated in proton conduction. In Staphylococcus epidermidis (strain ATCC 35984 / DSM 28319 / BCRC 17069 / CCUG 31568 / BM 3577 / RP62A), this protein is ATP synthase subunit delta.